The primary structure comprises 448 residues: Trigger factor (448 aa).

Residues 172 to 257 (GDRVTVDFVG…MKKVEWPHLP (86 aa)) form the PPIase FKBP-type domain.

This sequence belongs to the FKBP-type PPIase family. Tig subfamily.

Its subcellular location is the cytoplasm. It carries out the reaction [protein]-peptidylproline (omega=180) = [protein]-peptidylproline (omega=0). In terms of biological role, involved in protein export. Acts as a chaperone by maintaining the newly synthesized protein in an open conformation. Functions as a peptidyl-prolyl cis-trans isomerase. This is Trigger factor from Burkholderia multivorans (strain ATCC 17616 / 249).